Here is a 351-residue protein sequence, read N- to C-terminus: Calcium uniporter protein, mitochondrial (351 aa).

Residues 1–50 (MAAAAGRSLLLLLSSRGGGGGGAGGCGALTAGCFPGLGVSRHRQQQHHRT) constitute a mitochondrion transit peptide. The Mitochondrial matrix portion of the chain corresponds to 51 to 233 (VHQRIASWQN…ISRKAEKRTT (183 aa)). Phosphoserine; by CaMK2 occurs at positions 57 and 92. The N-terminal MCU domain stretch occupies residues 75–165 (VTVVYQNGLP…LTYHVRPPKR (91 aa)). C97 bears the S-glutathionyl cysteine mark. A coiled-coil region spans residues 192-223 (IEQHQLNKERELIERLEDLKEQLAPLEKVRIE). Residues 234–255 (LVLWGGLAYMATQFGILARLTW) traverse the membrane as a helical segment. The Mitochondrial intermembrane portion of the chain corresponds to 256–262 (WEYSWDI). The Selectivity filter signature appears at 260-268 (WDIMEPVTY). Residues 263–284 (MEPVTYFITYGSAMAMYAYFVM) form a helical membrane-spanning segment. A Ca(2+)-binding site is contributed by E264. Positions 285–290 (TRQEYV) are juxtamembrane helix. Topologically, residues 285–351 (TRQEYVYPEA…LPLRQIGEKD (67 aa)) are mitochondrial matrix. Residues 311 to 339 (RFDLEKYNQLKDAIAQAEMDLKRLRDPLQ) are a coiled coil. K332 is subject to N6-acetyllysine.

The protein belongs to the MCU (TC 1.A.77) family. As to quaternary structure, homotetramer. Component of the uniplex complex, composed of MCU, EMRE/SMDT1, MICU1 and MICU2 (or MICU3) in a 4:4:1:1 stoichiometry. Interacts with CCDC109B/MCUB; this inhibits channel activity. Interacts with MCUR1. Interactions with MICU1 and MCUR1 are mutually exclusive. Interacts with SLC25A23. Phosphorylation by CaMK2 in heart leads to increased MCU current. The regulation of MCU by CaMK2 is however subject to discussion: another group was unable to reproduce these results. Phosphorylated on tyrosines by PTK2B/PYK2, promoting oligomerization. In terms of processing, glutathionylation at Cys-97 in response to reactive oxygen species (ROS) promotes MCU higher-order assembly, leading to constitutive activation of the MCU channel and mitochondrial calcium overload. Post-translationally, undergoes proteolytic degradation by SPG7.

It is found in the mitochondrion inner membrane. It catalyses the reaction Ca(2+)(in) = Ca(2+)(out). MCU channel activity is regulated by the heterodimer composed of MICU1 and either MICU2 or MICU3, which act as calcium-sensors. At low calcium levels, MICU1 occludes the pore of the MCU channel, preventing mitochondrial calcium uptake. At higher calcium levels, calcium-binding to MICU1 and MICU2 (or MICU3) induces a conformational change that weakens MCU-MICU1 interactions and moves the MICU1-MICU2 heterodimer away from the pore, allowing calcium permeation through the channel. MCU channel activity is gated by EMRE/SMDT1 via the juxtamembrane helix loop. Inhibited by ruthenium red or its derivative Ru360. In terms of biological role, channel-forming and calcium-conducting subunit of the mitochondrial inner membrane calcium uniporter complex (uniplex), which mediates calcium uptake into the mitochondrial matrix. MCU channel activity is regulated by the calcium-sensor subunits of the uniplex MICU1 and MICU2 (or MICU3). Mitochondrial calcium homeostasis plays key roles in cellular physiology and regulates ATP production, cytoplasmic calcium signals and activation of cell death pathways. Involved in buffering the amplitude of systolic calcium rises in cardiomyocytes. While dispensable for baseline homeostatic cardiac function, acts as a key regulator of short-term mitochondrial calcium loading underlying a 'fight-or-flight' response during acute stress: acts by mediating a rapid increase of mitochondrial calcium in pacemaker cells. Participates in mitochondrial permeability transition during ischemia-reperfusion injury. Mitochondrial calcium uptake in skeletal muscle cells is involved in muscle size in adults. Regulates synaptic vesicle endocytosis kinetics in central nerve terminal. Regulates glucose-dependent insulin secretion in pancreatic beta-cells by regulating mitochondrial calcium uptake. Involved in antigen processing and presentation. This is Calcium uniporter protein, mitochondrial from Homo sapiens (Human).